The following is a 190-amino-acid chain: Crossover junction endodeoxyribonuclease RuvC (190 aa).

Catalysis depends on residues D8, E67, and D139. The Mg(2+) site is built by D8, E67, and D139.

Belongs to the RuvC family. In terms of assembly, homodimer which binds Holliday junction (HJ) DNA. The HJ becomes 2-fold symmetrical on binding to RuvC with unstacked arms; it has a different conformation from HJ DNA in complex with RuvA. In the full resolvosome a probable DNA-RuvA(4)-RuvB(12)-RuvC(2) complex forms which resolves the HJ. Mg(2+) is required as a cofactor.

It localises to the cytoplasm. It carries out the reaction Endonucleolytic cleavage at a junction such as a reciprocal single-stranded crossover between two homologous DNA duplexes (Holliday junction).. The RuvA-RuvB-RuvC complex processes Holliday junction (HJ) DNA during genetic recombination and DNA repair. Endonuclease that resolves HJ intermediates. Cleaves cruciform DNA by making single-stranded nicks across the HJ at symmetrical positions within the homologous arms, yielding a 5'-phosphate and a 3'-hydroxyl group; requires a central core of homology in the junction. The consensus cleavage sequence is 5'-(A/T)TT(C/G)-3'. Cleavage occurs on the 3'-side of the TT dinucleotide at the point of strand exchange. HJ branch migration catalyzed by RuvA-RuvB allows RuvC to scan DNA until it finds its consensus sequence, where it cleaves and resolves the cruciform DNA. The chain is Crossover junction endodeoxyribonuclease RuvC from Haemophilus influenzae (strain ATCC 51907 / DSM 11121 / KW20 / Rd).